We begin with the raw amino-acid sequence, 189 residues long: Ribonuclease HII (189 aa).

The 189-residue stretch at 1 to 189 (MIAGVDEAGR…PVRRALNIDC (189 aa)) folds into the RNase H type-2 domain. The a divalent metal cation site is built by aspartate 6, glutamate 7, and aspartate 98.

Belongs to the RNase HII family. The cofactor is Mn(2+). It depends on Mg(2+) as a cofactor.

The protein resides in the cytoplasm. It carries out the reaction Endonucleolytic cleavage to 5'-phosphomonoester.. Endonuclease that specifically degrades the RNA of RNA-DNA hybrids. The sequence is that of Ribonuclease HII from Acinetobacter baylyi (strain ATCC 33305 / BD413 / ADP1).